The following is a 115-amino-acid chain: NADH-ubiquinone oxidoreductase chain 3 (115 aa).

The next 3 helical transmembrane spans lie at 1 to 21, 55 to 75, and 87 to 107; these read MITLHMVVLPFLITLFLLLII, FFLVAILFILFDLEIILLFPL, and AIILASVFVIILTLGLIYEWL.

The protein belongs to the complex I subunit 3 family.

It localises to the mitochondrion membrane. The enzyme catalyses a ubiquinone + NADH + 5 H(+)(in) = a ubiquinol + NAD(+) + 4 H(+)(out). Functionally, core subunit of the mitochondrial membrane respiratory chain NADH dehydrogenase (Complex I) that is believed to belong to the minimal assembly required for catalysis. Complex I functions in the transfer of electrons from NADH to the respiratory chain. The immediate electron acceptor for the enzyme is believed to be ubiquinone. The chain is NADH-ubiquinone oxidoreductase chain 3 (MT-ND3) from Myxine glutinosa (Atlantic hagfish).